The chain runs to 159 residues: L-alanine exporter AlaE (159 aa).

Helical transmembrane passes span 17 to 37 (FAMV…VSGM), 48 to 68 (LSIP…DYLL), 86 to 106 (MVAY…AVGA), and 110 to 130 (QIIT…IVYG).

Belongs to the AlaE exporter family.

It localises to the cell inner membrane. In terms of biological role, exports L-alanine. This is L-alanine exporter AlaE from Photobacterium profundum (strain SS9).